Reading from the N-terminus, the 227-residue chain is MNDIILTSQKLYKSYHDGTSTVEVLKGVDLAITKGDRIAIIGPSGSGKSTLLHLLGGLDKPTSGLITLGNVNWQKINEKQRCQLRNQQLGFVYQFHHLLPEFTALENVMMPLLLAGMAVKDAEEKVINMLEQVGLKPRLTHKPAQLSGGERQRVAIARALVHQPHCVLADEPTGNLDEATASKVFDLMLELNKKMNTALVIVTHDQRIAERMDRVLVLHEGSLYARE.

The 222-residue stretch at 6–227 (LTSQKLYKSY…LHEGSLYARE (222 aa)) folds into the ABC transporter domain. 42–49 (GPSGSGKS) is a binding site for ATP.

The protein belongs to the ABC transporter superfamily. Lipoprotein translocase (TC 3.A.1.125) family. In terms of assembly, the complex is composed of two ATP-binding proteins (LolD) and two transmembrane proteins (LolC and LolE).

The protein localises to the cell inner membrane. In terms of biological role, part of the ABC transporter complex LolCDE involved in the translocation of mature outer membrane-directed lipoproteins, from the inner membrane to the periplasmic chaperone, LolA. Responsible for the formation of the LolA-lipoprotein complex in an ATP-dependent manner. This chain is Lipoprotein-releasing system ATP-binding protein LolD, found in Legionella pneumophila (strain Lens).